We begin with the raw amino-acid sequence, 396 residues long: Elongation factor Tu (396 aa).

In terms of domain architecture, tr-type G spans Lys10–Glu206. The tract at residues Gly19–Thr26 is G1. Residue Gly19–Thr26 participates in GTP binding. Position 26 (Thr26) interacts with Mg(2+). The tract at residues Gly60–Asn64 is G2. The segment at Asp81–Gly84 is G3. Residues Asp81–His85 and Asn136–Asp139 contribute to the GTP site. Positions Asn136–Asp139 are G4. Residues Ser174 to Leu176 form a G5 region.

This sequence belongs to the TRAFAC class translation factor GTPase superfamily. Classic translation factor GTPase family. EF-Tu/EF-1A subfamily. In terms of assembly, monomer.

Its subcellular location is the cytoplasm. The catalysed reaction is GTP + H2O = GDP + phosphate + H(+). In terms of biological role, GTP hydrolase that promotes the GTP-dependent binding of aminoacyl-tRNA to the A-site of ribosomes during protein biosynthesis. This is Elongation factor Tu from Nitrosomonas europaea (strain ATCC 19718 / CIP 103999 / KCTC 2705 / NBRC 14298).